The sequence spans 599 residues: Elongation factor 4 (599 aa).

Residues 2–184 enclose the tr-type G domain; the sequence is NHIRNFSIIA…RLVRDIPAPE (183 aa). Residues 14–19 and 131–134 each bind GTP; these read DHGKST and NKID.

It belongs to the TRAFAC class translation factor GTPase superfamily. Classic translation factor GTPase family. LepA subfamily.

It localises to the cell inner membrane. It catalyses the reaction GTP + H2O = GDP + phosphate + H(+). In terms of biological role, required for accurate and efficient protein synthesis under certain stress conditions. May act as a fidelity factor of the translation reaction, by catalyzing a one-codon backward translocation of tRNAs on improperly translocated ribosomes. Back-translocation proceeds from a post-translocation (POST) complex to a pre-translocation (PRE) complex, thus giving elongation factor G a second chance to translocate the tRNAs correctly. Binds to ribosomes in a GTP-dependent manner. This is Elongation factor 4 from Yersinia pestis (strain Pestoides F).